Here is a 402-residue protein sequence, read N- to C-terminus: Probable tRNA pseudouridine synthase tag-124 (402 aa).

Aspartate 85 acts as the Nucleophile in catalysis. The tract at residues 383 to 402 (SKKEKMAEKKKNGEESSDKL) is disordered.

Belongs to the tRNA pseudouridine synthase TruA family.

It carries out the reaction a uridine in tRNA = a pseudouridine in tRNA. Formation of pseudouridine at position 38 and 39 in the anticodon stem and loop of transfer RNAs. The protein is Probable tRNA pseudouridine synthase tag-124 (tag-124) of Caenorhabditis elegans.